Consider the following 475-residue polypeptide: D-lactate dehydrogenase (475 aa).

One can recognise an FAD-binding PCMH-type domain in the interval 43–222 (YGKARPEVLV…TELTLKVIPA (180 aa)).

Belongs to the FAD-binding oxidoreductase/transferase type 4 family. Requires FAD as cofactor. Zn(2+) serves as cofactor.

It carries out the reaction (R)-lactate + A = pyruvate + AH2. In terms of biological role, catalyzes the dehydrogenation of (R)-lactate (D-lactate) to pyruvate. Active in vitro with the artificial electron acceptor 2,6-dichlorophenolindophenol (DCPIP), but not with NAD, NADP, or cytochrome c. Also displays a very low oxidase activity in vitro on D-lactate and L-lactate with O2 as the electron acceptor, but this activity is most likely not physiological. In Anaerostipes hadrus, this protein is D-lactate dehydrogenase.